We begin with the raw amino-acid sequence, 636 residues long: DNA mismatch repair protein MutL (636 aa).

Residues 341-420 form a disordered region; sequence APLINKPEQQ…PGAEEYTPEA (80 aa). Residues 348–358 show a composition bias toward basic and acidic residues; the sequence is EQQKLDFDQVR.

Belongs to the DNA mismatch repair MutL/HexB family.

In terms of biological role, this protein is involved in the repair of mismatches in DNA. It is required for dam-dependent methyl-directed DNA mismatch repair. May act as a 'molecular matchmaker', a protein that promotes the formation of a stable complex between two or more DNA-binding proteins in an ATP-dependent manner without itself being part of a final effector complex. The chain is DNA mismatch repair protein MutL from Bacillus licheniformis (strain ATCC 14580 / DSM 13 / JCM 2505 / CCUG 7422 / NBRC 12200 / NCIMB 9375 / NCTC 10341 / NRRL NRS-1264 / Gibson 46).